A 347-amino-acid chain; its full sequence is Dihydroorotase (347 aa).

Zn(2+) contacts are provided by H13 and H15. Residues 15–17 (HLR) and N41 each bind substrate. Residues K99, H136, and H174 each coordinate Zn(2+). The residue at position 99 (K99) is an N6-carboxylysine. Substrate is bound at residue H136. L219 contributes to the substrate binding site. Residue D247 coordinates Zn(2+). The active site involves D247. Residues H251 and A263 each contribute to the substrate site.

This sequence belongs to the metallo-dependent hydrolases superfamily. DHOase family. Class II DHOase subfamily. As to quaternary structure, homodimer. Requires Zn(2+) as cofactor.

It carries out the reaction (S)-dihydroorotate + H2O = N-carbamoyl-L-aspartate + H(+). The protein operates within pyrimidine metabolism; UMP biosynthesis via de novo pathway; (S)-dihydroorotate from bicarbonate: step 3/3. In terms of biological role, catalyzes the reversible cyclization of carbamoyl aspartate to dihydroorotate. The protein is Dihydroorotase of Sinorhizobium medicae (strain WSM419) (Ensifer medicae).